We begin with the raw amino-acid sequence, 119 residues long: Protein yippee-like 2 (119 aa).

The Yippee domain maps to 19–116; the sequence is RTYSCIHCRA…IELAHMIKDN (98 aa). 4 residues coordinate Zn(2+): Cys-23, Cys-26, Cys-79, and Cys-82.

It belongs to the yippee family. In terms of assembly, may interact with FAM168B.

Its subcellular location is the nucleus. The protein localises to the nucleolus. This chain is Protein yippee-like 2 (YPEL2), found in Chlorocebus aethiops (Green monkey).